The sequence spans 468 residues: MQKPQTIFEKIWENHMVHEEEGKPSLLYIDQHLVHEVTSPQAFEGLRLNNRKVRRPDLTFATMDHNVPTVNRESFKDEISKKQMDALKKNCEEFGIKLADMYHPDQGIVHVIGPQLGLTQPGKTIVCGDSHTSTHGAFGALAFGIGTSEVEHVLATQTIWQDKPKTLNVKVIGELGIGVTAKDLILAIIAKFGVQFGTGYVMEYTGESIRKMSMEERMTICNMSIEAGARAGLISPDQTTVDYLRGREMVPKGEAYDTLAAEWLQLATDEDAVYDDTVTIHANEIEPQVTWGTNPGMCVPISSSTPSIEKASYPDEVERALEYMGLTENQLMTSIEVDHVFIGSCTNSRLSDLKKAAAIVKGKKVKAGIRAMVVPGSFLVKQKAEEIGLDQVFMDAGFEWRNSGCSMCLGMNDDIVPAGGRCASTSNRNFEGRQGNGARTHLVSPEMAAAAAIEGHFVDVRSYASVPS.

3 residues coordinate [4Fe-4S] cluster: Cys345, Cys405, and Cys408.

The protein belongs to the aconitase/IPM isomerase family. LeuC type 1 subfamily. Heterodimer of LeuC and LeuD. It depends on [4Fe-4S] cluster as a cofactor.

The enzyme catalyses (2R,3S)-3-isopropylmalate = (2S)-2-isopropylmalate. It participates in amino-acid biosynthesis; L-leucine biosynthesis; L-leucine from 3-methyl-2-oxobutanoate: step 2/4. Catalyzes the isomerization between 2-isopropylmalate and 3-isopropylmalate, via the formation of 2-isopropylmaleate. The polypeptide is 3-isopropylmalate dehydratase large subunit (Oceanobacillus iheyensis (strain DSM 14371 / CIP 107618 / JCM 11309 / KCTC 3954 / HTE831)).